The sequence spans 249 residues: Homeobox protein TGIF2LX (249 aa).

A compositionally biased stretch (basic and acidic residues) spans 1 to 27 (MEAAADRPAETRSRVEKDSRRAKKDSP). 2 disordered regions span residues 1–60 (MEAA…KKKR) and 121–215 (QRRG…EPVS). Over residues 28–46 (AKTQSPAQDTSIMLRSNAD) the composition is skewed to polar residues. Positions 55–118 (EHKKKRKGYL…INARRRILPD (64 aa)) form a DNA-binding region, homeobox; TALE-type. Positions 159–172 (DNVQSLPLRSSPKG) are enriched in polar residues. Positions 202 to 215 (VSNITSSSSPEPVS) are enriched in low complexity.

This sequence belongs to the TALE/TGIF homeobox family.

The protein resides in the nucleus. Its function is as follows. May have a transcription role in testis. The sequence is that of Homeobox protein TGIF2LX (TGIF2LX) from Miopithecus talapoin (Angolan talapoin).